Consider the following 479-residue polypeptide: Adenosylhomocysteinase (479 aa).

The substrate site is built by T66, D142, and E203. 204 to 206 contacts NAD(+); sequence TTT. Residues K233 and D237 each coordinate substrate. Residues N238, 267 to 272, E290, N325, 346 to 348, and N394 each bind NAD(+); these read GYGDVG and IGH.

It belongs to the adenosylhomocysteinase family. NAD(+) is required as a cofactor.

It localises to the cytoplasm. The catalysed reaction is S-adenosyl-L-homocysteine + H2O = L-homocysteine + adenosine. The protein operates within amino-acid biosynthesis; L-homocysteine biosynthesis; L-homocysteine from S-adenosyl-L-homocysteine: step 1/1. Its function is as follows. May play a key role in the regulation of the intracellular concentration of adenosylhomocysteine. This chain is Adenosylhomocysteinase, found in Nitratidesulfovibrio vulgaris (strain ATCC 29579 / DSM 644 / CCUG 34227 / NCIMB 8303 / VKM B-1760 / Hildenborough) (Desulfovibrio vulgaris).